Consider the following 172-residue polypeptide: Transcription factor MafF (172 aa).

A basic motif region spans residues R51–K76. The region spanning R51–L114 is the bZIP domain. The tract at residues L79–L93 is leucine-zipper. The segment at V140–S172 is disordered. Positions S145–S172 are enriched in pro residues.

This sequence belongs to the bZIP family. Maf subfamily. As to quaternary structure, monomer and homo- or heterodimer. Interacts with MIP. Forms high affinity heterodimers with members of the CNC-bZIP family such as NFE2L1/NRF1.

It is found in the nucleus. In terms of biological role, since they lack a putative transactivation domain, the small Mafs behave as transcriptional repressors when they dimerize among themselves. However, they seem to serve as transcriptional activators by dimerizing with other (usually larger) basic-zipper proteins, such as NFE2L1/NRF1, and recruiting them to specific DNA-binding sites. Interacts with the upstream promoter region of the oxytocin receptor gene. May be a transcriptional enhancer in the up-regulation of the oxytocin receptor gene at parturition. The polypeptide is Transcription factor MafF (MAFF) (Bos taurus (Bovine)).